The primary structure comprises 305 residues: Sulfate adenylyltransferase subunit 2 (305 aa).

It belongs to the PAPS reductase family. CysD subfamily. Heterodimer composed of CysD, the smaller subunit, and CysN.

It carries out the reaction sulfate + ATP + H(+) = adenosine 5'-phosphosulfate + diphosphate. Its pathway is sulfur metabolism; hydrogen sulfide biosynthesis; sulfite from sulfate: step 1/3. Functionally, with CysN forms the ATP sulfurylase (ATPS) that catalyzes the adenylation of sulfate producing adenosine 5'-phosphosulfate (APS) and diphosphate, the first enzymatic step in sulfur assimilation pathway. APS synthesis involves the formation of a high-energy phosphoric-sulfuric acid anhydride bond driven by GTP hydrolysis by CysN coupled to ATP hydrolysis by CysD. The chain is Sulfate adenylyltransferase subunit 2 from Pseudomonas fluorescens (strain Pf0-1).